A 138-amino-acid polypeptide reads, in one-letter code: Putative pre-16S rRNA nuclease (138 aa).

The protein belongs to the YqgF nuclease family.

Its subcellular location is the cytoplasm. Functionally, could be a nuclease involved in processing of the 5'-end of pre-16S rRNA. In Shigella dysenteriae serotype 1 (strain Sd197), this protein is Putative pre-16S rRNA nuclease.